The sequence spans 209 residues: Ras-related protein Rab-2-A (209 aa).

Residue 13 to 21 coordinates GTP; that stretch reads GDTGVGKSC. The Effector region signature appears at 35–43; it reads HDLTIGVEF. GTP-binding positions include 61–65, 119–122, and 149–151; these read DTAGQ, NKCD, and SAK. S-geranylgeranyl cysteine attachment occurs at residues Cys207 and Cys208.

The protein belongs to the small GTPase superfamily. Rab family.

It is found in the endoplasmic reticulum membrane. Its subcellular location is the golgi apparatus membrane. Protein transport. Probably involved in vesicular traffic. The polypeptide is Ras-related protein Rab-2-A (RAB2A) (Zea mays (Maize)).